Here is a 761-residue protein sequence, read N- to C-terminus: 5-methyltetrahydropteroyltriglutamate--homocysteine methyltransferase (761 aa).

Residues 16-19 (RELK) and lysine 116 contribute to the 5-methyltetrahydropteroyltri-L-glutamate site. L-homocysteine is bound by residues 437–439 (IGS) and glutamate 490. Residues 437 to 439 (IGS) and glutamate 490 contribute to the L-methionine site. 5-methyltetrahydropteroyltri-L-glutamate is bound by residues 521–522 (RC) and tryptophan 567. Residue aspartate 605 participates in L-homocysteine binding. Aspartate 605 serves as a coordination point for L-methionine. Glutamate 611 contacts 5-methyltetrahydropteroyltri-L-glutamate. Zn(2+) contacts are provided by histidine 647, cysteine 649, and glutamate 671. Histidine 700 functions as the Proton donor in the catalytic mechanism. Residue cysteine 732 participates in Zn(2+) binding.

Belongs to the vitamin-B12 independent methionine synthase family. Zn(2+) serves as cofactor.

The catalysed reaction is 5-methyltetrahydropteroyltri-L-glutamate + L-homocysteine = tetrahydropteroyltri-L-glutamate + L-methionine. It functions in the pathway amino-acid biosynthesis; L-methionine biosynthesis via de novo pathway; L-methionine from L-homocysteine (MetE route): step 1/1. In terms of biological role, catalyzes the transfer of a methyl group from 5-methyltetrahydrofolate to homocysteine resulting in methionine formation. In Chromohalobacter salexigens (strain ATCC BAA-138 / DSM 3043 / CIP 106854 / NCIMB 13768 / 1H11), this protein is 5-methyltetrahydropteroyltriglutamate--homocysteine methyltransferase.